A 260-amino-acid chain; its full sequence is Thiazole synthase (260 aa).

Catalysis depends on lysine 96, which acts as the Schiff-base intermediate with DXP. 1-deoxy-D-xylulose 5-phosphate contacts are provided by residues glycine 157, 183–184, and 205–206; these read AG and AS.

The protein belongs to the ThiG family. As to quaternary structure, homotetramer. Forms heterodimers with either ThiH or ThiS.

It localises to the cytoplasm. The enzyme catalyses [ThiS sulfur-carrier protein]-C-terminal-Gly-aminoethanethioate + 2-iminoacetate + 1-deoxy-D-xylulose 5-phosphate = [ThiS sulfur-carrier protein]-C-terminal Gly-Gly + 2-[(2R,5Z)-2-carboxy-4-methylthiazol-5(2H)-ylidene]ethyl phosphate + 2 H2O + H(+). It functions in the pathway cofactor biosynthesis; thiamine diphosphate biosynthesis. In terms of biological role, catalyzes the rearrangement of 1-deoxy-D-xylulose 5-phosphate (DXP) to produce the thiazole phosphate moiety of thiamine. Sulfur is provided by the thiocarboxylate moiety of the carrier protein ThiS. In vitro, sulfur can be provided by H(2)S. This Corynebacterium glutamicum (strain ATCC 13032 / DSM 20300 / JCM 1318 / BCRC 11384 / CCUG 27702 / LMG 3730 / NBRC 12168 / NCIMB 10025 / NRRL B-2784 / 534) protein is Thiazole synthase.